A 2112-amino-acid chain; its full sequence is Phenolphthiocerol synthesis polyketide synthase type I Pks15/1 (2112 aa).

The 424-residue stretch at Thr-46–Glu-469 folds into the Ketosynthase family 3 (KS3) domain. Active-site for beta-ketoacyl synthase activity residues include Cys-216, His-351, and His-391. The acyltransferase stretch occupies residues Thr-579–Val-893. The active-site For acyltransferase activity is the Ser-670. Residues His-941–Thr-1063 are N-terminal hotdog fold. The segment at His-941–Leu-1101 is dehydratase. In terms of domain architecture, PKS/mFAS DH spans His-941–Arg-1215. The Proton acceptor; for dehydratase activity role is filled by His-973. The C-terminal hotdog fold stretch occupies residues Ala-1075–Arg-1215. Residue Asp-1136 is the Proton donor; for dehydratase activity of the active site. The interval Gly-1406 to Leu-1711 is enoylreductase. NADP(+) contacts are provided by residues Val-1536–Ala-1553 and Thr-1725–Ala-1740. Positions Gly-1724–Pro-1905 are beta-ketoacyl reductase. The 76-residue stretch at Glu-2010–Met-2085 folds into the Carrier domain. The residue at position 2045 (Ser-2045) is an O-(pantetheine 4'-phosphoryl)serine. Polar residues predominate over residues Gln-2084 to Val-2100. Positions Gln-2084–Ala-2112 are disordered.

This sequence belongs to the thiolase-like superfamily. Beta-ketoacyl-ACP synthases family. Pantetheine 4'-phosphate serves as cofactor.

The enzyme catalyses a fatty acyl-[ACP] + malonyl-[ACP] + H(+) = a 3-oxoacyl-[ACP] + holo-[ACP] + CO2. Its pathway is lipid metabolism; fatty acid biosynthesis. In terms of biological role, catalyzes the elongation by iterative transfer of p-hydroxybenzoyl group from FadD22 (pHBA-S-FAdD22) to form p-hydroxyphenylalkanoate (pHPA) intermediates during phenolphthiocerol (PPOL) biosynthesis. PPOL is an important intermediate in the biosynthesis of phenolic glycolipid (mycosid B). In Mycobacterium bovis (strain ATCC BAA-935 / AF2122/97), this protein is Phenolphthiocerol synthesis polyketide synthase type I Pks15/1 (pks15/1).